Consider the following 79-residue polypeptide: NAD(P)H-quinone oxidoreductase subunit L (79 aa).

Transmembrane regions (helical) follow at residues 10 to 30 (IIIA…IPAV) and 48 to 68 (GFMY…SPFL).

This sequence belongs to the complex I NdhL subunit family. As to quaternary structure, NDH-1 can be composed of about 15 different subunits; different subcomplexes with different compositions have been identified which probably have different functions.

It is found in the cellular thylakoid membrane. It catalyses the reaction a plastoquinone + NADH + (n+1) H(+)(in) = a plastoquinol + NAD(+) + n H(+)(out). It carries out the reaction a plastoquinone + NADPH + (n+1) H(+)(in) = a plastoquinol + NADP(+) + n H(+)(out). In terms of biological role, NDH-1 shuttles electrons from an unknown electron donor, via FMN and iron-sulfur (Fe-S) centers, to quinones in the respiratory and/or the photosynthetic chain. The immediate electron acceptor for the enzyme in this species is believed to be plastoquinone. Couples the redox reaction to proton translocation, and thus conserves the redox energy in a proton gradient. Cyanobacterial NDH-1 also plays a role in inorganic carbon-concentration. The chain is NAD(P)H-quinone oxidoreductase subunit L from Microcystis aeruginosa (strain NIES-843 / IAM M-2473).